The chain runs to 264 residues: S-adenosylmethionine decarboxylase proenzyme (264 aa).

Residue S112 is the Schiff-base intermediate with substrate; via pyruvic acid of the active site. Position 112 is a pyruvic acid (Ser); by autocatalysis (S112). Residue H117 is the Proton acceptor; for processing activity of the active site. The active-site Proton donor; for catalytic activity is the C140.

It belongs to the prokaryotic AdoMetDC family. Type 2 subfamily. In terms of assembly, heterooctamer of four alpha and four beta chains arranged as a tetramer of alpha/beta heterodimers. It depends on pyruvate as a cofactor. Is synthesized initially as an inactive proenzyme. Formation of the active enzyme involves a self-maturation process in which the active site pyruvoyl group is generated from an internal serine residue via an autocatalytic post-translational modification. Two non-identical subunits are generated from the proenzyme in this reaction, and the pyruvate is formed at the N-terminus of the alpha chain, which is derived from the carboxyl end of the proenzyme. The post-translation cleavage follows an unusual pathway, termed non-hydrolytic serinolysis, in which the side chain hydroxyl group of the serine supplies its oxygen atom to form the C-terminus of the beta chain, while the remainder of the serine residue undergoes an oxidative deamination to produce ammonia and the pyruvoyl group blocking the N-terminus of the alpha chain.

It carries out the reaction S-adenosyl-L-methionine + H(+) = S-adenosyl 3-(methylsulfanyl)propylamine + CO2. Its pathway is amine and polyamine biosynthesis; S-adenosylmethioninamine biosynthesis; S-adenosylmethioninamine from S-adenosyl-L-methionine: step 1/1. Catalyzes the decarboxylation of S-adenosylmethionine to S-adenosylmethioninamine (dcAdoMet), the propylamine donor required for the synthesis of the polyamines spermine and spermidine from the diamine putrescine. The polypeptide is S-adenosylmethionine decarboxylase proenzyme (Escherichia coli O45:K1 (strain S88 / ExPEC)).